Here is a 37-residue protein sequence, read N- to C-terminus: Cytochrome b6-f complex subunit 5 (37 aa).

A helical membrane pass occupies residues 5–25 (LLSGIVLGLIPITLAGLFVTA).

This sequence belongs to the PetG family. In terms of assembly, the 4 large subunits of the cytochrome b6-f complex are cytochrome b6, subunit IV (17 kDa polypeptide, PetD), cytochrome f and the Rieske protein, while the 4 small subunits are PetG, PetL, PetM and PetN. The complex functions as a dimer.

It localises to the plastid. The protein resides in the chloroplast thylakoid membrane. Component of the cytochrome b6-f complex, which mediates electron transfer between photosystem II (PSII) and photosystem I (PSI), cyclic electron flow around PSI, and state transitions. PetG is required for either the stability or assembly of the cytochrome b6-f complex. This Cryptomeria japonica (Japanese cedar) protein is Cytochrome b6-f complex subunit 5.